A 137-amino-acid chain; its full sequence is Nucleoside diphosphate kinase (137 aa).

K9, F57, R85, T91, R102, and N112 together coordinate ATP. Catalysis depends on H115, which acts as the Pros-phosphohistidine intermediate.

It belongs to the NDK family. In terms of assembly, homotetramer. Mg(2+) is required as a cofactor.

The protein localises to the cytoplasm. It carries out the reaction a 2'-deoxyribonucleoside 5'-diphosphate + ATP = a 2'-deoxyribonucleoside 5'-triphosphate + ADP. It catalyses the reaction a ribonucleoside 5'-diphosphate + ATP = a ribonucleoside 5'-triphosphate + ADP. Its function is as follows. Major role in the synthesis of nucleoside triphosphates other than ATP. The ATP gamma phosphate is transferred to the NDP beta phosphate via a ping-pong mechanism, using a phosphorylated active-site intermediate. The protein is Nucleoside diphosphate kinase of Wolinella succinogenes (strain ATCC 29543 / DSM 1740 / CCUG 13145 / JCM 31913 / LMG 7466 / NCTC 11488 / FDC 602W) (Vibrio succinogenes).